Reading from the N-terminus, the 493-residue chain is Cytochrome P450 Tp9025 (493 aa).

The helical; Signal-anchor for type II membrane protein transmembrane segment at 1–21 threads the bilayer; it reads MALYIIFLLIASSFILFSFIF. Residues Asn-209 and Asn-411 are each glycosylated (N-linked (GlcNAc...) asparagine). Residue Cys-433 coordinates heme.

This sequence belongs to the cytochrome P450 family. Heme is required as a cofactor.

The protein localises to the membrane. The protein operates within secondary metabolite biosynthesis; terpenoid biosynthesis. Its function is as follows. Probably involved in the biosynthesis of germacrene-derived sesquiterpene lactones. This chain is Cytochrome P450 Tp9025, found in Tanacetum parthenium (Feverfew).